We begin with the raw amino-acid sequence, 223 residues long: Uracil-DNA glycosylase (223 aa).

D67 functions as the Proton acceptor in the catalytic mechanism.

Belongs to the uracil-DNA glycosylase (UDG) superfamily. UNG family.

It localises to the cytoplasm. It catalyses the reaction Hydrolyzes single-stranded DNA or mismatched double-stranded DNA and polynucleotides, releasing free uracil.. Its function is as follows. Excises uracil residues from the DNA which can arise as a result of misincorporation of dUMP residues by DNA polymerase or due to deamination of cytosine. This Borrelia turicatae (strain 91E135) protein is Uracil-DNA glycosylase.